Here is a 295-residue protein sequence, read N- to C-terminus: Protein FAM221A (295 aa).

Residues 272-283 (QERLLKEKEQKR) show a composition bias toward basic and acidic residues. The interval 272–295 (QERLLKEKEQKRQKNSKPPTTNRP) is disordered.

It belongs to the FAM221 family.

This is Protein FAM221A (fam221a) from Xenopus tropicalis (Western clawed frog).